The following is a 442-amino-acid chain: MQKTTPITAYKSTCLSGKIKIPGDKSISHRSLILGGLANGETHIHGLLESDDVLNTAAAMQAMGACIIKKADRWIIRGTGNGCLLAAEKPLNFGNAGTGARLVMGMVGPYHMKTTFIGDASLSKRPMGRILNPLRLMGVEIEATHGDRLPLTLYGPKMANPIRYRIPIASAQVKSAILLAGLNTAGTTTVIEPILTRDHTEKMLKAFGAELEIKTDAEGTRFIHLNGQPHLTGQTIHIPGDPSSAAFPIIAALLVENSDITIENVLINKSRMGLIETLWEMDAKIELLNQHKTGGENVADLRVKSSMLKGVTVPKERAPSMIDEYPALAVAAAFAEGKTVMLGIDELRVKESDRLSALAQGLKINHVDCEEGKDFLIVHGKSSAKGLGGGHVTTHLDHRIAMSFLIFGLVSEKPVTIDDKRMIATSFPEFIPFIQQLGGKIS.

The 3-phosphoshikimate site is built by Lys25, Ser26, and Arg30. Lys25 contacts phosphoenolpyruvate. Phosphoenolpyruvate is bound by residues Gly97 and Arg125. 3-phosphoshikimate is bound by residues Ser170, Gln172, Asp323, and Lys350. Gln172 is a phosphoenolpyruvate binding site. Asp323 serves as the catalytic Proton acceptor. The phosphoenolpyruvate site is built by Arg354 and Arg399.

Belongs to the EPSP synthase family. As to quaternary structure, monomer.

The protein localises to the cytoplasm. The enzyme catalyses 3-phosphoshikimate + phosphoenolpyruvate = 5-O-(1-carboxyvinyl)-3-phosphoshikimate + phosphate. It functions in the pathway metabolic intermediate biosynthesis; chorismate biosynthesis; chorismate from D-erythrose 4-phosphate and phosphoenolpyruvate: step 6/7. In terms of biological role, catalyzes the transfer of the enolpyruvyl moiety of phosphoenolpyruvate (PEP) to the 5-hydroxyl of shikimate-3-phosphate (S3P) to produce enolpyruvyl shikimate-3-phosphate and inorganic phosphate. The chain is 3-phosphoshikimate 1-carboxyvinyltransferase from Bartonella quintana (strain Toulouse) (Rochalimaea quintana).